Consider the following 563-residue polypeptide: Probable Xaa-Pro aminopeptidase PEPP (563 aa).

Mn(2+)-binding residues include Asp-331, Asp-342, Glu-491, and Glu-532.

Belongs to the peptidase M24B family. Mn(2+) is required as a cofactor.

The enzyme catalyses Release of any N-terminal amino acid, including proline, that is linked to proline, even from a dipeptide or tripeptide.. Catalyzes the removal of a penultimate prolyl residue from the N-termini of peptides. The protein is Probable Xaa-Pro aminopeptidase PEPP (PEPP) of Verticillium alfalfae (strain VaMs.102 / ATCC MYA-4576 / FGSC 10136) (Verticillium wilt of alfalfa).